Reading from the N-terminus, the 113-residue chain is Protein Rev (113 aa).

Positions 15 to 23 are homomultimerization; sequence LIKFLYQSN. The disordered stretch occupies residues 17-45; sequence KFLYQSNPPPSPEGTRQARRNRRRRWRQR. The Nuclear localization signal and RNA-binding (RRE) signature appears at 31–47; that stretch reads TRQARRNRRRRWRQRQR. The segment covering 33-45 has biased composition (basic residues); the sequence is QARRNRRRRWRQR. Positions 70–81 match the Nuclear export signal and binding to XPO1 motif; it reads LQLPPLERLTLD. Phosphoserine; by host is present on residues S89 and S96. The disordered stretch occupies residues 89 to 113; it reads SGTQGVGSPQILVESPTILESGTKE.

It belongs to the HIV-1 REV protein family. In terms of assembly, homomultimer; when bound to the RRE. Multimeric assembly is essential for activity and may involve XPO1. Binds to human KPNB1, XPO1, TNPO1, RANBP5 and IPO7. Interacts with the viral Integrase. Interacts with human KHDRBS1. Interacts with human NAP1; this interaction decreases Rev multimerization and stimulates its activity. Interacts with human DEAD-box helicases DDX3 and DDX24; these interactions may serve for viral RNA export to the cytoplasm and packaging, respectively. Interacts with human PSIP1; this interaction may inhibit HIV-1 DNA integration by promoting dissociation of the Integrase-LEDGF/p75 complex. Asymmetrically arginine dimethylated at one site by host PRMT6. Methylation impairs the RNA-binding activity and export of viral RNA from the nucleus to the cytoplasm. In terms of processing, phosphorylated by protein kinase CK2. Presence of, and maybe binding to the N-terminus of the regulatory beta subunit of CK2 is necessary for CK2-mediated Rev's phosphorylation.

It is found in the host nucleus. It localises to the host nucleolus. The protein resides in the host cytoplasm. Functionally, escorts unspliced or incompletely spliced viral pre-mRNAs (late transcripts) out of the nucleus of infected cells. These pre-mRNAs carry a recognition sequence called Rev responsive element (RRE) located in the env gene, that is not present in fully spliced viral mRNAs (early transcripts). This function is essential since most viral proteins are translated from unspliced or partially spliced pre-mRNAs which cannot exit the nucleus by the pathway used by fully processed cellular mRNAs. Rev itself is translated from a fully spliced mRNA that readily exits the nucleus. Rev's nuclear localization signal (NLS) binds directly to KPNB1/Importin beta-1 without previous binding to KPNA1/Importin alpha-1. KPNB1 binds to the GDP bound form of RAN (Ran-GDP) and targets Rev to the nucleus. In the nucleus, the conversion from Ran-GDP to Ran-GTP dissociates Rev from KPNB1 and allows Rev's binding to the RRE in viral pre-mRNAs. Rev multimerization on the RRE via cooperative assembly exposes its nuclear export signal (NES) to the surface. Rev can then form a complex with XPO1/CRM1 and Ran-GTP, leading to nuclear export of the complex. Conversion from Ran-GTP to Ran-GDP mediates dissociation of the Rev/RRE/XPO1/RAN complex, so that Rev can return to the nucleus for a subsequent round of export. Beside KPNB1, also seems to interact with TNPO1/Transportin-1, RANBP5/IPO5 and IPO7/RANBP7 for nuclear import. The nucleoporin-like HRB/RIP is an essential cofactor that probably indirectly interacts with Rev to release HIV RNAs from the perinuclear region to the cytoplasm. This is Protein Rev from Human immunodeficiency virus type 1 group M subtype B (isolate JH32) (HIV-1).